A 275-amino-acid chain; its full sequence is MEMO1 family protein Nmar_0215 (275 aa).

This sequence belongs to the MEMO1 family.

The chain is MEMO1 family protein Nmar_0215 from Nitrosopumilus maritimus (strain SCM1).